The primary structure comprises 468 residues: MADDAGLETPLCSEQFGSGEARGCRAAADGSLQWEVGGWRWWGLSRAFTVKPEGRDAGEVGASGAPSPPLSGLQAVFLPQGFPDSVSPDYLPYQLWDSVQAFASSLSGSLATQAVLLGIGVGNAKATVSAATATWLVKDSTGMLGRIVFAWWKGSKLDCNAKQWRLFADILNDVAMFLEIMAPVYPICFTMTVSTSNLAKCIVSVAGGATRAALTVHQARRNNMADVSAKDSSQETLVNLAGLLVSLLMLPLVSGCPGFSLGCFFFLTALHIYANYRAVRALVMETLNEGRLRLVLKHYLQRGEVLDPTAANRMEPLWTGFWPAPSLSLGVPLHRLVSSVFELQQLVEGHQESYLLCWDQSQNQVQVVLNQKAGPKTILRAATHGLMLGALQGDGPLPAELEELRNRVRAGPKKESWVVVKETHEVLDMLFPKFLKGLQDAGWKTEKHQLEVDEWRATWLLSPEKKVL.

An N-acetylalanine modification is found at Ala2. Thr49 bears the Phosphothreonine mark. Residues 247-267 (LLMLPLVSGCPGFSLGCFFFL) form a helical membrane-spanning segment.

This sequence belongs to the RUS1 family.

It is found in the membrane. This chain is RUS family member 1, found in Homo sapiens (Human).